A 734-amino-acid polypeptide reads, in one-letter code: Polyphosphate kinase (734 aa).

Asn-67 lines the ATP pocket. Residues Arg-392 and Arg-422 each contribute to the Mg(2+) site. Residues 447-481 enclose the PLD phosphodiesterase domain; sequence THLKTHSKIALVVKRINNELTSFVHLGTGNYNDKT. The active-site Phosphohistidine intermediate is the His-452. 3 residues coordinate ATP: Tyr-485, Arg-581, and His-609. The interval 705 to 734 is disordered; that stretch reads KKQSVQPSGQPVHSRRGGSWMRKLKNTFKR.

It belongs to the polyphosphate kinase 1 (PPK1) family. Requires Mg(2+) as cofactor. An intermediate of this reaction is the autophosphorylated ppk in which a phosphate is covalently linked to a histidine residue through a N-P bond.

It carries out the reaction [phosphate](n) + ATP = [phosphate](n+1) + ADP. Functionally, catalyzes the reversible transfer of the terminal phosphate of ATP to form a long-chain polyphosphate (polyP). This is Polyphosphate kinase from Staphylococcus epidermidis (strain ATCC 12228 / FDA PCI 1200).